Consider the following 263-residue polypeptide: Endonuclease 8 (263 aa).

The active-site Schiff-base intermediate with DNA is proline 2. Glutamate 3 (proton donor) is an active-site residue. Lysine 53 (proton donor; for beta-elimination activity) is an active-site residue. 3 residues coordinate DNA: glutamine 70, arginine 125, and asparagine 169. The segment at 229–263 adopts an FPG-type zinc-finger fold; that stretch reads KVFHRDGEACERCGGIIEKTTLSSRPFYWCPHCQK. Arginine 253 (proton donor; for delta-elimination activity) is an active-site residue.

This sequence belongs to the FPG family. Requires Zn(2+) as cofactor.

The enzyme catalyses 2'-deoxyribonucleotide-(2'-deoxyribose 5'-phosphate)-2'-deoxyribonucleotide-DNA = a 3'-end 2'-deoxyribonucleotide-(2,3-dehydro-2,3-deoxyribose 5'-phosphate)-DNA + a 5'-end 5'-phospho-2'-deoxyribonucleoside-DNA + H(+). In terms of biological role, involved in base excision repair of DNA damaged by oxidation or by mutagenic agents. Acts as a DNA glycosylase that recognizes and removes damaged bases. Has a preference for oxidized pyrimidines, such as thymine glycol, 5,6-dihydrouracil and 5,6-dihydrothymine. Has AP (apurinic/apyrimidinic) lyase activity and introduces nicks in the DNA strand. Cleaves the DNA backbone by beta-delta elimination to generate a single-strand break at the site of the removed base with both 3'- and 5'-phosphates. This Salmonella arizonae (strain ATCC BAA-731 / CDC346-86 / RSK2980) protein is Endonuclease 8.